Consider the following 623-residue polypeptide: mRNA-capping enzyme (623 aa).

The TPase stretch occupies residues 13–224 (MGLPDRWLHC…IDNGRPSTSQ (212 aa)). Residues 44–196 (YDNQIAERRY…YDPTEDDKIL (153 aa)) enclose the Tyrosine-protein phosphatase domain. Cys-136 serves as the catalytic Phosphocysteine intermediate. Over residues 213–229 (TQIDNGRPSTSQQIPAT) the composition is skewed to polar residues. The segment at 213–243 (TQIDNGRPSTSQQIPATNGNNNQNGNQLSGG) is disordered. A compositionally biased stretch (low complexity) spans 230–239 (NGNNNQNGNQ). The segment at 241 to 585 (SGGGDNSKLF…NPVTETYLIE (345 aa)) is GTase. Residue Lys-311 is the N6-GMP-lysine intermediate of the active site. GTP-binding positions include Arg-316, Arg-331, 357-359 (DTE), 477-479 (KWK), and 553-558 (RERTDK). Residues 603-623 (HHQIHQQQLHEGEPEARRQKL) are disordered. The span at 610–623 (QLHEGEPEARRQKL) shows a compositional bias: basic and acidic residues.

In the N-terminal section; belongs to the non-receptor class of the protein-tyrosine phosphatase family. This sequence in the C-terminal section; belongs to the eukaryotic GTase family.

The protein localises to the nucleus. The catalysed reaction is a 5'-end triphospho-ribonucleoside in mRNA + H2O = a 5'-end diphospho-ribonucleoside in mRNA + phosphate + H(+). The enzyme catalyses a 5'-end diphospho-ribonucleoside in mRNA + GTP + H(+) = a 5'-end (5'-triphosphoguanosine)-ribonucleoside in mRNA + diphosphate. Its activity is regulated as follows. RNA triphosphatase activity is inhibited by magnesium. Bifunctional mRNA-capping enzyme exhibiting RNA 5'-triphosphate monophosphatase activity in the N-terminal part and mRNA guanylyltransferase activity in the C-terminal part. Catalyzes the first two steps of cap formation: by removing the gamma-phosphate from the 5'-triphosphate end of nascent mRNA to yield a diphosphate end, and by transferring the GMP moiety of GTP to the 5'-diphosphate terminus via a covalent enzyme-GMP reaction intermediate. The polypeptide is mRNA-capping enzyme (cel-1) (Caenorhabditis elegans).